A 351-amino-acid polypeptide reads, in one-letter code: SH3 domain-containing protein 3 (351 aa).

Coiled coils occupy residues 1–21 (MDAFRRQASKLRDQVAKQQLA) and 193–213 (LQLAEAKMQELKANMAVLGKE). The BAR domain occupies 31 to 267 (YESSDVMVID…MVTEKQHKES (237 aa)). One can recognise an SH3 domain in the interval 281-340 (TSYFLAEVIHPFSAASEKELDLDKGDYIVVRKVSQTGWAEGECKGKAGWFPMAYIEKRQR).

In terms of assembly, interacts with FREE1. Interacts (via SH3 domain) with DRP2A/ADL6. Binds to SH3P2. As to expression, detected in all tissues except seedlings.

It is found in the cytoplasmic vesicle. The protein localises to the clathrin-coated vesicle. Its function is as follows. May be involved in the recruitment of DRP2A to the accessory protein complex and in the negative regulation of its GTPase activity. The chain is SH3 domain-containing protein 3 from Arabidopsis thaliana (Mouse-ear cress).